Consider the following 153-residue polypeptide: Protein E6 (153 aa).

2 zinc fingers span residues 37–73 (CHFCSSFMDLNNKASYLASQLKVIVKDCCFKGACIKC) and 110–146 (CSECLALLTASEKLDAKCELQTFILVRHMWRTSCRAC).

This sequence belongs to the papillomaviridae E6 protein family. As to quaternary structure, forms homodimers. Interacts with ubiquitin-protein ligase UBE3A/E6-AP; this interaction stimulates UBE3A ubiquitin activity. Interacts with host BAK1.

The protein localises to the host cytoplasm. Its subcellular location is the host nucleus. In terms of biological role, plays a major role in the induction and maintenance of cellular transformation. E6 associates with host UBE3A/E6-AP ubiquitin-protein ligase and modulates its activity. Protects host keratinocytes from apoptosis by mediating the degradation of host BAK1. May also inhibit host immune response. The sequence is that of Protein E6 from Micromys minutus papillomavirus (MmPV).